The chain runs to 398 residues: Ribosomal RNA small subunit methyltransferase B (398 aa).

Residues cysteine 221–lysine 227, aspartate 242, aspartate 268, and aspartate 283 contribute to the S-adenosyl-L-methionine site. Cysteine 336 functions as the Nucleophile in the catalytic mechanism.

The protein belongs to the class I-like SAM-binding methyltransferase superfamily. RsmB/NOP family.

The protein localises to the cytoplasm. The enzyme catalyses cytidine(967) in 16S rRNA + S-adenosyl-L-methionine = 5-methylcytidine(967) in 16S rRNA + S-adenosyl-L-homocysteine + H(+). Its function is as follows. Specifically methylates the cytosine at position 967 (m5C967) of 16S rRNA. The polypeptide is Ribosomal RNA small subunit methyltransferase B (Thermus thermophilus (strain ATCC 27634 / DSM 579 / HB8)).